We begin with the raw amino-acid sequence, 1382 residues long: Hepatocyte growth factor receptor (1382 aa).

The signal sequence occupies residues 1 to 24 (MKAPAVLAPGILVLLFTLVPRSHG). The Extracellular portion of the chain corresponds to 25-933 (ECKEALVKSE…VIVQPDQNFM (909 aa)). Residues 27 to 516 (KEALVKSEMN…TGNKITKIPL (490 aa)) enclose the Sema domain. N-linked (GlcNAc...) asparagine glycosylation is present at Asn-45. Cystine bridges form between Cys-95/Cys-101, Cys-98/Cys-160, Cys-133/Cys-141, and Cys-173/Cys-176. Residue Asn-106 is glycosylated (N-linked (GlcNAc...) asparagine). Residues Asn-203 and Asn-359 are each glycosylated (N-linked (GlcNAc...) asparagine). Disulfide bonds link Cys-299–Cys-364 and Cys-386–Cys-398. N-linked (GlcNAc...) asparagine glycans are attached at residues Asn-400 and Asn-406. 4 disulfide bridges follow: Cys-521-Cys-539, Cys-527-Cys-562, Cys-530-Cys-546, and Cys-542-Cys-552. IPT/TIG domains follow at residues 564 to 656 (PAIY…FSYV), 658 to 740 (PVIT…FSYR), and 743 to 837 (PIVD…LTYV). An O-linked (Man) threonine glycan is attached at Thr-583. Residues Asn-608, Asn-614, and Asn-636 are each glycosylated (N-linked (GlcNAc...) asparagine). Residues Thr-677 and Thr-762 are each glycosylated (O-linked (Man) threonine). N-linked (GlcNAc...) asparagine glycosylation is found at Asn-786 and Asn-880. A helical transmembrane segment spans residues 934-956 (GLIVGGVSISIILLLLLGLFLWL). Topologically, residues 957–1382 (KKKKRIKDLG…QDNVDGTVDT (426 aa)) are cytoplasmic. Position 967 is a phosphoserine (Ser-967). Thr-978 is modified (phosphothreonine). Phosphoserine occurs at positions 991, 998, and 1001. Tyr-1004 is subject to Phosphotyrosine. In terms of domain architecture, Protein kinase spans 1079-1346 (VHFSEVIGRG…RISTIFSTFI (268 aa)). Residues 1085–1093 (IGRGHFGCV) and Lys-1111 each bind ATP. Asp-1205 (proton acceptor) is an active-site residue. An interaction with RANBP9 region spans residues 1213–1382 (LDEKFTVKVA…QDNVDGTVDT (170 aa)). Tyr-1231 is subject to Phosphotyrosine. 2 positions are modified to phosphotyrosine; by autocatalysis: Tyr-1235 and Tyr-1236. Thr-1290 carries the phosphothreonine modification. The segment at 1321-1360 (WHPKAEMRPSFSELVSRISTIFSTFIGEHYVHVNATYVNV) is interaction with MUC20. Residues Tyr-1350 and Tyr-1357 each carry the phosphotyrosine; by autocatalysis modification. Phosphotyrosine is present on Tyr-1366.

Belongs to the protein kinase superfamily. Tyr protein kinase family. As to quaternary structure, heterodimer made of an alpha chain (50 kDa) and a beta chain (145 kDa) which are disulfide linked. Binds PLXNB1. Interacts when phosphorylated with downstream effectors including STAT3, PIK3R1, SRC, PCLG1, GRB2 and GAB1. Interacts with SPSB1, SPSB2 and SPSB4. Interacts with INPP5D/SHIP1. When phosphorylated at Tyr-1357, interacts with INPPL1/SHIP2. Interacts with RANBP9 and RANBP10, as well as SPSB1, SPSB2, SPSB3 and SPSB4. SPSB1 binding occurs in the presence and in the absence of HGF, however HGF treatment has a positive effect on this interaction. Interacts with MUC20; prevents interaction with GRB2 and suppresses hepatocyte growth factor-induced cell proliferation. Interacts with GRB10. Interacts with PTPN1 and PTPN2. Interacts with HSP90AA1 and HSP90AB1; the interaction suppresses MET kinase activity. Interacts with tensin TNS3. Interacts (when phosphorylated) with tensin TNS4 (via SH2 domain); the interaction increases MET protein stability by inhibiting MET endocytosis and subsequent lysosomal degradation. In terms of processing, autophosphorylated in response to ligand binding on Tyr-1235 and Tyr-1236 in the kinase domain leading to further phosphorylation of Tyr-1350 and Tyr-1357 in the C-terminal multifunctional docking site. Dephosphorylated by PTPRJ at Tyr-1350 and Tyr-1366. Dephosphorylated by PTPN1 and PTPN2. Ubiquitinated. Ubiquitination by CBL regulates the receptor stability and activity through proteasomal degradation. Post-translationally, O-mannosylation of IPT/TIG domains by TMEM260 is required for protein maturation. O-mannosylated residues are composed of single mannose glycans that are not elongated or modified.

The protein localises to the membrane. The catalysed reaction is L-tyrosyl-[protein] + ATP = O-phospho-L-tyrosyl-[protein] + ADP + H(+). Its activity is regulated as follows. In its inactive state, the C-terminal tail interacts with the catalytic domain and inhibits the kinase activity. Upon ligand binding, the C-terminal tail is displaced and becomes phosphorylated, thus increasing the kinase activity. Its function is as follows. Receptor tyrosine kinase that transduces signals from the extracellular matrix into the cytoplasm by binding to hepatocyte growth factor/HGF ligand. Regulates many physiological processes including proliferation, scattering, morphogenesis and survival. Ligand binding at the cell surface induces autophosphorylation of MET on its intracellular domain that provides docking sites for downstream signaling molecules. Following activation by ligand, interacts with the PI3-kinase subunit PIK3R1, PLCG1, SRC, GRB2, STAT3 or the adapter GAB1. Recruitment of these downstream effectors by MET leads to the activation of several signaling cascades including the RAS-ERK, PI3 kinase-AKT, or PLCgamma-PKC. The RAS-ERK activation is associated with the morphogenetic effects while PI3K/AKT coordinates prosurvival effects. During embryonic development, MET signaling plays a role in gastrulation, development and migration of muscles and neuronal precursors, angiogenesis and kidney formation. In adults, participates in wound healing as well as organ regeneration and tissue remodeling. Also promotes differentiation and proliferation of hematopoietic cells. This chain is Hepatocyte growth factor receptor (MET), found in Oryctolagus cuniculus (Rabbit).